The following is a 232-amino-acid chain: Pseudaminic acid cytidylyltransferase (232 aa).

This sequence belongs to the CMP-NeuNAc synthase family. Mg(2+) is required as a cofactor.

It carries out the reaction pseudaminate + CTP = CMP-pseudaminate + diphosphate. Catalyzes the final step in the biosynthesis of pseudaminic acid, a sialic-acid-like sugar that is used to modify flagellin. Mediates the activation of pseudaminic acid with CMP by forming CMP-pseudaminic acid. The sequence is that of Pseudaminic acid cytidylyltransferase (pseF) from Campylobacter jejuni subsp. jejuni serotype O:23/36 (strain 81-176).